Consider the following 200-residue polypeptide: Alpha-amylase/subtilisin inhibitor (200 aa).

The signal sequence occupies residues 1–22; that stretch reads MVSLRLPLILLSLLAISFSCSA. 2 disulfide bridges follow: Cys63–Cys112 and Cys162–Cys166.

The protein belongs to the protease inhibitor I3 (leguminous Kunitz-type inhibitor) family.

In terms of biological role, this protein inhibits independently subtilisin and T.castaneum alpha-amylase but not barley alpha-amylase. This chain is Alpha-amylase/subtilisin inhibitor (RASI), found in Oryza sativa subsp. japonica (Rice).